We begin with the raw amino-acid sequence, 359 residues long: DNA-directed RNA polymerase RPB3-11 homolog (359 aa).

In the N-terminal section; belongs to the archaeal RpoD/eukaryotic RPB3 RNA polymerase subunit family. This sequence in the C-terminal section; belongs to the archaeal RpoL/eukaryotic RPB11/RPC19 RNA polymerase subunit family. Part of the viral DNA-directed RNA polymerase that consists of 8 polII-like subunits (RPB1, RPB2, RPB3, RPB5, RPB6, RPB7, RPB9, RPB10), a capping enzyme and a termination factor.

It is found in the host cytoplasm. It localises to the virion. In terms of biological role, component of the DNA-directed RNA polymerase (RNAP) that catalyzes the transcription in the cytoplasm of viral DNA into RNA using the four ribonucleoside triphosphates as substrates. The chain is DNA-directed RNA polymerase RPB3-11 homolog from Ornithodoros (relapsing fever ticks).